The primary structure comprises 102 residues: Large ribosomal subunit protein bL21 (102 aa).

Belongs to the bacterial ribosomal protein bL21 family. In terms of assembly, part of the 50S ribosomal subunit. Contacts protein L20.

This protein binds to 23S rRNA in the presence of protein L20. The sequence is that of Large ribosomal subunit protein bL21 from Ehrlichia ruminantium (strain Welgevonden).